Consider the following 404-residue polypeptide: MKRTVIMMLDSFGVGAAGDAAKFGDLGSDTFGHIAKACAEGKADIGREGPLTLPNLARLGLAHAAMESTGAFAPGFADDVELIGAYGHAQELSSGKDTPSGHWEMAGVPVLFDWGYFSEHQNSFPKELTDKILARAGLDGFLGNCHASGTTILEELGEEHMRSGKPIFYTSADSVFQIACHEGTFGLENLYRLCEIAREELEPYNIGRVIARPFDGTGPNDFARTGNRKDYSLEPPAKTVLDKLKAAGGEVVSVGKIADIYAYCGITKKVKANGLEALFDATLAEVKSAGENTIVFTNFVDFDSHYGHRRDVAGYAKGLEYFDSRLPEMLSLLDEDDLLILTADHGCDPTWQGTDHTREYVPVLAYGAGLKAGSLGRRNSFADIGQSIASYFKLEPMEYGESFI.

Positions 10, 303, 308, 344, 345, and 356 each coordinate Mn(2+).

It belongs to the phosphopentomutase family. Requires Mn(2+) as cofactor.

Its subcellular location is the cytoplasm. It carries out the reaction 2-deoxy-alpha-D-ribose 1-phosphate = 2-deoxy-D-ribose 5-phosphate. It catalyses the reaction alpha-D-ribose 1-phosphate = D-ribose 5-phosphate. It functions in the pathway carbohydrate degradation; 2-deoxy-D-ribose 1-phosphate degradation; D-glyceraldehyde 3-phosphate and acetaldehyde from 2-deoxy-alpha-D-ribose 1-phosphate: step 1/2. Functionally, isomerase that catalyzes the conversion of deoxy-ribose 1-phosphate (dRib-1-P) and ribose 1-phosphate (Rib-1-P) to deoxy-ribose 5-phosphate (dRib-5-P) and ribose 5-phosphate (Rib-5-P), respectively. The chain is Phosphopentomutase from Shewanella sp. (strain MR-7).